Reading from the N-terminus, the 360-residue chain is Phosphoserine aminotransferase (360 aa).

R41 provides a ligand contact to L-glutamate. Residues W101, T152, D172, and Q195 each coordinate pyridoxal 5'-phosphate. The residue at position 196 (K196) is an N6-(pyridoxal phosphate)lysine. Pyridoxal 5'-phosphate is bound at residue 237-238; the sequence is NT.

It belongs to the class-V pyridoxal-phosphate-dependent aminotransferase family. SerC subfamily. Homodimer. Pyridoxal 5'-phosphate serves as cofactor.

It localises to the cytoplasm. The enzyme catalyses O-phospho-L-serine + 2-oxoglutarate = 3-phosphooxypyruvate + L-glutamate. The catalysed reaction is 4-(phosphooxy)-L-threonine + 2-oxoglutarate = (R)-3-hydroxy-2-oxo-4-phosphooxybutanoate + L-glutamate. Its pathway is amino-acid biosynthesis; L-serine biosynthesis; L-serine from 3-phospho-D-glycerate: step 2/3. It participates in cofactor biosynthesis; pyridoxine 5'-phosphate biosynthesis; pyridoxine 5'-phosphate from D-erythrose 4-phosphate: step 3/5. In terms of biological role, catalyzes the reversible conversion of 3-phosphohydroxypyruvate to phosphoserine and of 3-hydroxy-2-oxo-4-phosphonooxybutanoate to phosphohydroxythreonine. This chain is Phosphoserine aminotransferase, found in Burkholderia ambifaria (strain ATCC BAA-244 / DSM 16087 / CCUG 44356 / LMG 19182 / AMMD) (Burkholderia cepacia (strain AMMD)).